The sequence spans 302 residues: Protoheme IX farnesyltransferase (302 aa).

A run of 9 helical transmembrane segments spans residues 27 to 47 (VVAL…PGMV), 53 to 73 (LFGL…NHVI), 100 to 120 (LVFA…AVNV), 121 to 141 (LTAV…TVFL), 149 to 169 (IVWG…AVTG), 175 to 195 (PLLL…ALAI), 215 to 235 (VAFT…VSLV), 237 to 257 (FIIH…GIGF), and 273 to 293 (AMPT…LLLV).

The protein belongs to the UbiA prenyltransferase family. Protoheme IX farnesyltransferase subfamily.

The protein resides in the cell inner membrane. The enzyme catalyses heme b + (2E,6E)-farnesyl diphosphate + H2O = Fe(II)-heme o + diphosphate. Its pathway is porphyrin-containing compound metabolism; heme O biosynthesis; heme O from protoheme: step 1/1. In terms of biological role, converts heme B (protoheme IX) to heme O by substitution of the vinyl group on carbon 2 of heme B porphyrin ring with a hydroxyethyl farnesyl side group. The chain is Protoheme IX farnesyltransferase from Thioalkalivibrio sulfidiphilus (strain HL-EbGR7).